The following is a 55-amino-acid chain: MPQLNPAPWFMIFMFTWAIFLTILPPKVMAHTFPNEPSPQGMTTPKTAPWNWPWH.

The chain crosses the membrane as a helical span at residues 4-24; the sequence is LNPAPWFMIFMFTWAIFLTIL. Residues 34-55 are disordered; that stretch reads PNEPSPQGMTTPKTAPWNWPWH.

Belongs to the ATPase protein 8 family. As to quaternary structure, component of the ATP synthase complex composed at least of ATP5F1A/subunit alpha, ATP5F1B/subunit beta, ATP5MC1/subunit c (homooctomer), MT-ATP6/subunit a, MT-ATP8/subunit 8, ATP5ME/subunit e, ATP5MF/subunit f, ATP5MG/subunit g, ATP5MK/subunit k, ATP5MJ/subunit j, ATP5F1C/subunit gamma, ATP5F1D/subunit delta, ATP5F1E/subunit epsilon, ATP5PF/subunit F6, ATP5PB/subunit b, ATP5PD/subunit d, ATP5PO/subunit OSCP. ATP synthase complex consists of a soluble F(1) head domain (subunits alpha(3) and beta(3)) - the catalytic core - and a membrane F(0) domain - the membrane proton channel (subunits c, a, 8, e, f, g, k and j). These two domains are linked by a central stalk (subunits gamma, delta, and epsilon) rotating inside the F1 region and a stationary peripheral stalk (subunits F6, b, d, and OSCP).

It localises to the mitochondrion membrane. Its function is as follows. Subunit 8, of the mitochondrial membrane ATP synthase complex (F(1)F(0) ATP synthase or Complex V) that produces ATP from ADP in the presence of a proton gradient across the membrane which is generated by electron transport complexes of the respiratory chain. ATP synthase complex consist of a soluble F(1) head domain - the catalytic core - and a membrane F(1) domain - the membrane proton channel. These two domains are linked by a central stalk rotating inside the F(1) region and a stationary peripheral stalk. During catalysis, ATP synthesis in the catalytic domain of F(1) is coupled via a rotary mechanism of the central stalk subunits to proton translocation. In vivo, can only synthesize ATP although its ATP hydrolase activity can be activated artificially in vitro. Part of the complex F(0) domain. This chain is ATP synthase F(0) complex subunit 8, found in Gadus morhua (Atlantic cod).